The primary structure comprises 690 residues: MKRLLLTSALPYANGHIHIGHLVEYTQTDIFARYWRMTGRRCISLCADDTHGTAIMIRARQEGRSEADVIADMSAAHQRDFAAFQIRFDHYGSTNSPANRALCEEIWASLRERGMVTTKEVTQLFDPQEGMFLADRFVKGTCPKCAAPDQYGDSCDRCGSTYAATDLVEPRSALTGARPEVRSAQHLMVAIEPERPFLSTWTQGEGRMPKEIANYLAGHFLSEPLRDWDVSRPAPYFGFEIPDAPGNYWYVWFDAPIGYMAASKEWCDREGEAFDDWWRSEETEIVHVIGKDIVYFHTLFWPAMLKSARFSLPSRVQVHGFLTVNGEKMSKSKGTFVLASTYLKHLDPAYLRYYYASKLSSKVDDIDLNLEELVNKVNAELVNKVVNLASRSSRFVAQTGLSAVYPEDGGLFASAAEEGDAIGAAYAAFDYARATRSIVALADRANEYVDRMQPWALAKQPEKKAELQAVCTVALNLFRQIVLYLAPVLPKLADDVARLLGCPMDRWALAKTPLVGTPVAAYEHLMKRVEPGAVEKMIAEGRPAEEAAAPGGAAGANAEAGQAAGGGAAAEDDGAALAKEPLAPECTIDDFSKVDLRVARIVAAEHVPEAKKLLKLTVSLGGEARRTVFAGIKAYYKPEDLIGRLVIVCANLAPRKMKFGLSEGMVLAAGDETVHLLSPDSGAKPGMRVH.

The 'HIGH' region signature appears at 11-21 (PYANGHIHIGH). The Zn(2+) site is built by Cys-142, Cys-145, Cys-155, and Cys-158. The short motif at 328–332 (KMSKS) is the 'KMSKS' region element. Position 331 (Lys-331) interacts with ATP. A tRNA-binding domain is found at 590 to 690 (DFSKVDLRVA…SGAKPGMRVH (101 aa)).

The protein belongs to the class-I aminoacyl-tRNA synthetase family. MetG type 1 subfamily. In terms of assembly, homodimer. It depends on Zn(2+) as a cofactor.

The protein localises to the cytoplasm. The catalysed reaction is tRNA(Met) + L-methionine + ATP = L-methionyl-tRNA(Met) + AMP + diphosphate. Is required not only for elongation of protein synthesis but also for the initiation of all mRNA translation through initiator tRNA(fMet) aminoacylation. The polypeptide is Methionine--tRNA ligase 1 (Sorangium cellulosum (strain So ce56) (Polyangium cellulosum (strain So ce56))).